A 313-amino-acid polypeptide reads, in one-letter code: Sideroflexin-4 (313 aa).

2 helical membrane passes run 87-107 and 141-161; these read AAFL…DTGI and TLLG…PHLF. Lys-173 is modified (N6-acetyllysine). 3 helical membrane-spanning segments follow: residues 175-191, 230-247, and 269-289; these read TLPI…NVFA, AVLF…IHIF, and FFMM…IGQI.

Belongs to the sideroflexin family. In terms of tissue distribution, largely restricted to kidney, brain and heart.

The protein localises to the mitochondrion inner membrane. In terms of biological role, mitochondrial amino-acid transporter. Does not act as a serine transporter: not able to mediate transport of serine into mitochondria. This Mus musculus (Mouse) protein is Sideroflexin-4.